The following is a 755-amino-acid chain: Serine/threonine-protein kinase GL21140 (755 aa).

Residues 18–52 (QASASGSGTPKKTAASSAAAQNSKQLLDQLSQQQK) show a composition bias toward low complexity. The interval 18-128 (QASASGSGTP…GSANTNGSAS (111 aa)) is disordered. Composition is skewed to basic and acidic residues over residues 53–66 (AQEEAETHSRRDCD) and 74–84 (EPEKDLDELRD). The span at 87 to 99 (GSLTGSGSVGKSN) shows a compositional bias: polar residues. The span at 100 to 128 (GSLSGASSTTSAPAGTSTPGSANTNGSAS) shows a compositional bias: low complexity. 2 Doublecortin domains span residues 157 to 243 (HRIK…VDYN) and 314 to 397 (RIVT…VDDF). Residues 484–742 (YTLSQIIGDG…SEDILDHYWT (259 aa)) enclose the Protein kinase domain. Residues 490 to 498 (IGDGNFAIV) and lysine 513 contribute to the ATP site. The Proton acceptor role is filled by aspartate 605.

It belongs to the protein kinase superfamily. CAMK Ser/Thr protein kinase family. CaMK subfamily.

It carries out the reaction L-seryl-[protein] + ATP = O-phospho-L-seryl-[protein] + ADP + H(+). The catalysed reaction is L-threonyl-[protein] + ATP = O-phospho-L-threonyl-[protein] + ADP + H(+). This Drosophila persimilis (Fruit fly) protein is Serine/threonine-protein kinase GL21140.